Reading from the N-terminus, the 472-residue chain is Methanethiol oxidase (472 aa).

Residue Ala2 is modified to N-acetylalanine. Residues Ser111 and Ser467 each carry the phosphoserine modification.

The protein belongs to the selenium-binding protein family. As to quaternary structure, interacts with USP33. In terms of processing, the N-terminus is blocked. Present in liver and colon (at protein level).

The protein localises to the nucleus. It is found in the cytoplasm. Its subcellular location is the cytosol. The protein resides in the membrane. It carries out the reaction methanethiol + O2 + H2O = hydrogen sulfide + formaldehyde + H2O2 + H(+). Its pathway is organosulfur degradation. Functionally, catalyzes the oxidation of methanethiol, an organosulfur compound known to be produced in substantial amounts by gut bacteria. Selenium-binding protein which may be involved in the sensing of reactive xenobiotics in the cytoplasm. May be involved in intra-Golgi protein transport. The chain is Methanethiol oxidase (Selenbp1) from Rattus norvegicus (Rat).